Here is a 581-residue protein sequence, read N- to C-terminus: Adenine deaminase (581 aa).

This sequence belongs to the metallo-dependent hydrolases superfamily. Adenine deaminase family. The cofactor is Mn(2+).

The catalysed reaction is adenine + H2O + H(+) = hypoxanthine + NH4(+). The sequence is that of Adenine deaminase from Brucella melitensis biotype 1 (strain ATCC 23456 / CCUG 17765 / NCTC 10094 / 16M).